We begin with the raw amino-acid sequence, 273 residues long: ATP synthase subunit a (273 aa).

The next 7 helical transmembrane spans lie at 34–54 (IINM…CLFM), 94–114 (FIAP…SLDF), 115–135 (LPVD…LITH), 143–163 (DLNG…FYNI), 171–191 (FVHE…NLLL), 218–238 (FLLI…GHVV), and 244–264 (AIFH…LTLV).

The protein belongs to the ATPase A chain family. In terms of assembly, F-type ATPases have 2 components, CF(1) - the catalytic core - and CF(0) - the membrane proton channel. CF(1) has five subunits: alpha(3), beta(3), gamma(1), delta(1), epsilon(1). CF(0) has three main subunits: a(1), b(2) and c(9-12). The alpha and beta chains form an alternating ring which encloses part of the gamma chain. CF(1) is attached to CF(0) by a central stalk formed by the gamma and epsilon chains, while a peripheral stalk is formed by the delta and b chains.

The protein resides in the cell inner membrane. In terms of biological role, key component of the proton channel; it plays a direct role in the translocation of protons across the membrane. This Janthinobacterium sp. (strain Marseille) (Minibacterium massiliensis) protein is ATP synthase subunit a.